A 291-amino-acid chain; its full sequence is Protease HtpX homolog (291 aa).

The next 2 helical transmembrane spans lie at 4–24 (VFLF…SARL) and 38–58 (LGML…ISLL). H144 lines the Zn(2+) pocket. E145 is an active-site residue. H148 is a Zn(2+) binding site. Transmembrane regions (helical) follow at residues 159 to 179 (LIQG…AYAL) and 199 to 219 (ISSI…VMYF). Zn(2+) is bound at residue E224.

The protein belongs to the peptidase M48B family. Zn(2+) serves as cofactor.

Its subcellular location is the cell inner membrane. In Chlorobium luteolum (strain DSM 273 / BCRC 81028 / 2530) (Pelodictyon luteolum), this protein is Protease HtpX homolog.